The chain runs to 682 residues: Putative protein RhsE (682 aa).

Residues 348–360 (ENGEREKAQRRSL) are compositionally biased toward basic and acidic residues. The segment at 348-372 (ENGEREKAQRRSLAETLQQEGSENG) is disordered.

Belongs to the RHS family.

Functionally, rhs elements have a nonessential function. They may play an important role in the natural ecology of the cell. The protein is Putative protein RhsE (rhsE) of Escherichia coli (strain K12).